Reading from the N-terminus, the 190-residue chain is Xanthine phosphoribosyltransferase (190 aa).

The xanthine site is built by leucine 20 and asparagine 27. Position 128-132 (128-132) interacts with 5-phospho-alpha-D-ribose 1-diphosphate; sequence ANGKA. A xanthine-binding site is contributed by lysine 156.

The protein belongs to the purine/pyrimidine phosphoribosyltransferase family. Xpt subfamily. Homodimer.

Its subcellular location is the cytoplasm. It catalyses the reaction XMP + diphosphate = xanthine + 5-phospho-alpha-D-ribose 1-diphosphate. Its pathway is purine metabolism; XMP biosynthesis via salvage pathway; XMP from xanthine: step 1/1. In terms of biological role, converts the preformed base xanthine, a product of nucleic acid breakdown, to xanthosine 5'-monophosphate (XMP), so it can be reused for RNA or DNA synthesis. The chain is Xanthine phosphoribosyltransferase from Ruminiclostridium cellulolyticum (strain ATCC 35319 / DSM 5812 / JCM 6584 / H10) (Clostridium cellulolyticum).